A 439-amino-acid polypeptide reads, in one-letter code: Telomeric repeat-binding factor 1 (439 aa).

The disordered stretch occupies residues 1–36 (MAEDVSSAAPSPRGCADGRDADPTEEQMAETERNDE). Ala2 is modified (N-acetylalanine). Residue Ser11 is modified to Phosphoserine. Residues 23-36 (PTEEQMAETERNDE) show a composition bias toward acidic residues. The interval 58–268 (EEEEEDAGLV…AAAKVVESKR (211 aa)) is TRFH mediates dimerization. Residue Lys213 forms a Glycyl lysine isopeptide (Lys-Gly) (interchain with G-Cter in SUMO2) linkage. Ser219 carries the post-translational modification Phosphoserine; by ATM. The tract at residues 265–378 (ESKRTRTITS…PVTPEKHRAR (114 aa)) is interaction with RLIM. Residues 266–311 (SKRTRTITSQDKPSGNDVEMETEANLDTRKSVSDKQSAVTESSEGT) are disordered. Residues 299-311 (DKQSAVTESSEGT) show a composition bias toward polar residues. Lys325 participates in a covalent cross-link: Glycyl lysine isopeptide (Lys-Gly) (interchain with G-Cter in SUMO2). Positions 326-375 (LQHGTQQQDLNKKERRVGTPQSTKKKKESRRATESRIPVSKSQPVTPEKH) are disordered. Positions 337-356 (KKERRVGTPQSTKKKKESRR) match the Nuclear localization signal motif. A Glycyl lysine isopeptide (Lys-Gly) (interchain with G-Cter in SUMO2) cross-link involves residue Lys366. An HTH myb-type domain is found at 375–432 (HRARKRQAWLWEEDKNLRSGVRKYGEGNWSKILLHYKFNNRTSVMLKDRWRTMKKLKL). A DNA-binding region (H-T-H motif) is located at residues 403–428 (WSKILLHYKFNNRTSVMLKDRWRTMK).

As to quaternary structure, homodimer; can contain both isoforms. Found in a complex with POT1; TINF2 and TNKS1. Interacts with ATM, TINF2, TNKS1, TNKS2, PINX1, NEK2 and MAPRE1. Component of the shelterin complex (telosome) composed of TERF1, TERF2, TINF2, TERF2IP ACD and POT1. Interacts with RLIM (via N-terminus). Interacts with FBXO4. Interaction with TINF2 protects against interaction with FBXO4 and subsequent polyubiquitination and proteasomal degradation. Interacts with GNL3L; this interaction promotes homodimerization. Interacts with TIN2. Interacts with RTEL1. Interactions with GNL3L and TIN2 are mutually exclusive. Interacts with CCDC79/TERB1. Interacts with TRIOBP isoform 1; mediates TERF1 localization to the centrosome. In terms of processing, phosphorylated preferentially on Ser-219 in an ATM-dependent manner in response to ionizing DNA damage. Post-translationally, ADP-ribosylation by TNKS1 or TNKS2 diminishes its ability to bind to telomeric DNA. Ubiquitinated by RLIM/RNF12, leading to its degradation by the proteasome. Ubiquitinated by a SCF (SKP1-CUL1-F-box protein) ubiquitin-protein ligase complex, leading to its degradation by the proteasome. Highly expressed and ubiquitous. Isoform Pin2 predominates.

The protein localises to the nucleus. It is found in the cytoplasm. It localises to the cytoskeleton. Its subcellular location is the spindle. The protein resides in the chromosome. The protein localises to the telomere. Functionally, binds the telomeric double-stranded 5'-TTAGGG-3' repeat and negatively regulates telomere length. Involved in the regulation of the mitotic spindle. Component of the shelterin complex (telosome) that is involved in the regulation of telomere length and protection. Shelterin associates with arrays of double-stranded 5'-TTAGGG-3' repeats added by telomerase and protects chromosome ends; without its protective activity, telomeres are no longer hidden from the DNA damage surveillance and chromosome ends are inappropriately processed by DNA repair pathways. The chain is Telomeric repeat-binding factor 1 (TERF1) from Homo sapiens (Human).